The following is a 210-amino-acid chain: Na(+)-translocating NADH-quinone reductase subunit D (210 aa).

The next 6 membrane-spanning stretches (helical) occupy residues 11–31 (ILAP…VCSA), 42–62 (FVMT…VSLI), 72–92 (IIVQ…VLKA), 103–123 (VFVG…AFAM), 131–151 (FIDG…VGFF), and 178–198 (NGLM…IWAI).

It belongs to the NqrDE/RnfAE family. As to quaternary structure, composed of six subunits; NqrA, NqrB, NqrC, NqrD, NqrE and NqrF.

It localises to the cell inner membrane. The enzyme catalyses a ubiquinone + n Na(+)(in) + NADH + H(+) = a ubiquinol + n Na(+)(out) + NAD(+). Functionally, NQR complex catalyzes the reduction of ubiquinone-1 to ubiquinol by two successive reactions, coupled with the transport of Na(+) ions from the cytoplasm to the periplasm. NqrA to NqrE are probably involved in the second step, the conversion of ubisemiquinone to ubiquinol. The sequence is that of Na(+)-translocating NADH-quinone reductase subunit D from Vibrio atlanticus (strain LGP32) (Vibrio splendidus (strain Mel32)).